The following is a 200-amino-acid chain: MALSLTAINLPPPPLRDNLLSSQFQFRPNLLKFPKIPSSSSSFNGISLKTVTPNNNNNNPFACHVSTSQFGVQETNKSYAEAVAVGKHIRMSADKARRVIDTIRGRPYEETLMILELMPYRACETILKIVFSAGANASNNLGLSKSSLVISKAEVNEGRTMKRTRPRAQGRANRILKRTCHITITVKGLPAESVVEASSS.

This sequence belongs to the universal ribosomal protein uL22 family. As to quaternary structure, part of the 50S ribosomal subunit.

It localises to the plastid. Its subcellular location is the chloroplast. In terms of biological role, this protein binds specifically to 23S rRNA. Its function is as follows. The globular domain of the protein is located near the polypeptide exit tunnel on the outside of the subunit, while an extended beta-hairpin is found that lines the wall of the exit tunnel in the center of the 70S ribosome. This Medicago sativa (Alfalfa) protein is Large ribosomal subunit protein uL22c (rpl22).